We begin with the raw amino-acid sequence, 353 residues long: Putative glycosyltransferase TagX (353 aa).

This sequence belongs to the glycosyltransferase 2 family.

The polypeptide is Putative glycosyltransferase TagX (tagX) (Staphylococcus aureus (strain MRSA252)).